Reading from the N-terminus, the 182-residue chain is Orotate phosphoribosyltransferase (182 aa).

Residues Arg-91, Lys-92, Lys-95, His-97, and 117 to 125 (EDVTTTGGS) contribute to the 5-phospho-alpha-D-ribose 1-diphosphate site. 2 residues coordinate orotate: Thr-121 and Arg-149.

Belongs to the purine/pyrimidine phosphoribosyltransferase family. PyrE subfamily. Homodimer. Mg(2+) serves as cofactor.

The catalysed reaction is orotidine 5'-phosphate + diphosphate = orotate + 5-phospho-alpha-D-ribose 1-diphosphate. It participates in pyrimidine metabolism; UMP biosynthesis via de novo pathway; UMP from orotate: step 1/2. In terms of biological role, catalyzes the transfer of a ribosyl phosphate group from 5-phosphoribose 1-diphosphate to orotate, leading to the formation of orotidine monophosphate (OMP). The sequence is that of Orotate phosphoribosyltransferase from Pyrococcus abyssi (strain GE5 / Orsay).